Reading from the N-terminus, the 83-residue chain is Small ribosomal subunit protein eS21 (83 aa).

Belongs to the eukaryotic ribosomal protein eS21 family. In terms of assembly, component of the 40S small ribosomal subunit. Interacts with sta.

The protein resides in the cytoplasm. It localises to the cytosol. Its subcellular location is the rough endoplasmic reticulum. The protein is Small ribosomal subunit protein eS21 (RpS21) of Ceratitis capitata (Mediterranean fruit fly).